A 289-amino-acid chain; its full sequence is Rhodopsin (289 aa).

Residues 1–7 (YLVNPAA) lie on the Extracellular side of the membrane. The helical transmembrane segment at 8 to 32 (YAAPGAYMFLLILVGFPVNFLTLYV) threads the bilayer. Residues 33–44 (TLEHKKLRTPLN) are Cytoplasmic-facing. A helical transmembrane segment spans residues 45–67 (YILLNLAVADLFMVLGGFTTTMY). Topologically, residues 68–81 (TSMHGYFVLGRLGC) are extracellular. A disulfide bond links cysteine 81 and cysteine 158. Residues 82 to 104 (NLEGFFATLGGEIALWSLVVLAI) traverse the membrane as a helical segment. Residues 105 to 107 (ERW) carry the 'Ionic lock' involved in activated form stabilization motif. Residues 105–123 (ERWIVVCKPISNFRFTEDH) are Cytoplasmic-facing. The chain crosses the membrane as a helical span at residues 124–144 (AIMGLAFSWVMALTCAVPPLV). The Extracellular portion of the chain corresponds to 145–173 (GWSRYIPEGMQCSCGVDYYTRAEGFNNES). Asparagine 171 carries an N-linked (GlcNAc...) asparagine glycan. The chain crosses the membrane as a helical span at residues 174-195 (FVIYMFIVHFLIPLSNNFFCYG). The Cytoplasmic portion of the chain corresponds to 196–223 (RLLCAVKEAAAAQQESETTQRAEREVSR). The chain crosses the membrane as a helical span at residues 224 to 245 (MVVMMVVSFLMCWLPYASVAWY). Residues 246 to 257 (IFCNQGSEFGPI) are Extracellular-facing. Residues 258-279 (FMTLPAFFAKSSAIYNPLIYIC) form a helical membrane-spanning segment. Lysine 267 is subject to N6-(retinylidene)lysine. At 280 to 289 (MNKHVRHCMI) the chain is on the cytoplasmic side.

Belongs to the G-protein coupled receptor 1 family. Opsin subfamily. In terms of processing, phosphorylated on some or all of the serine and threonine residues present in the C-terminal region. Contains one covalently linked retinal chromophore.

The protein resides in the membrane. It localises to the cell projection. The protein localises to the cilium. Its subcellular location is the photoreceptor outer segment. Photoreceptor required for image-forming vision at low light intensity. While most salt water fish species use retinal as chromophore, most freshwater fish use 3-dehydroretinal, or a mixture of retinal and 3-dehydroretinal. Light-induced isomerization of 11-cis to all-trans retinal triggers a conformational change that activates signaling via G-proteins. Subsequent receptor phosphorylation mediates displacement of the bound G-protein alpha subunit by arrestin and terminates signaling. The protein is Rhodopsin (rho) of Cottocomephorus grewingkii (Baikal yellowfin).